A 164-amino-acid polypeptide reads, in one-letter code: Transcription antitermination protein NusB (164 aa).

This sequence belongs to the NusB family.

Involved in transcription antitermination. Required for transcription of ribosomal RNA (rRNA) genes. Binds specifically to the boxA antiterminator sequence of the ribosomal RNA (rrn) operons. This is Transcription antitermination protein NusB from Desulfovibrio desulfuricans (strain ATCC 27774 / DSM 6949 / MB).